The chain runs to 241 residues: MATVSMRDMLQAGVHFGHQTRYWNPKMKPFIFGARNKVHIINLEKTVPMFNEALAELTKISSRKGKILFVGTKRAASEAVKEAANNCDQFFVNHRWLGGMLTNWKTVRQSIKRLKDLEIQSQDGTFDKLTKKEALMRTRELNKLENSLGGIKDMGGLPDALFVVDADHEHIAIKEANNLGIPVFSIVDTNSDPDGVDFIIPGNDDAIRAVKLYLGAVATAVREGRSQDLAVQAEESFVEAE.

Belongs to the universal ribosomal protein uS2 family.

The protein is Small ribosomal subunit protein uS2 of Yersinia pestis bv. Antiqua (strain Antiqua).